The primary structure comprises 134 residues: Transcription antitermination protein NusB (134 aa).

Belongs to the NusB family.

Its function is as follows. Involved in transcription antitermination. Required for transcription of ribosomal RNA (rRNA) genes. Binds specifically to the boxA antiterminator sequence of the ribosomal RNA (rrn) operons. The sequence is that of Transcription antitermination protein NusB from Halalkalibacterium halodurans (strain ATCC BAA-125 / DSM 18197 / FERM 7344 / JCM 9153 / C-125) (Bacillus halodurans).